Here is a 252-residue protein sequence, read N- to C-terminus: Imidazole glycerol phosphate synthase subunit HisF (252 aa).

Catalysis depends on residues aspartate 11 and aspartate 130.

It belongs to the HisA/HisF family. Heterodimer of HisH and HisF.

It localises to the cytoplasm. It catalyses the reaction 5-[(5-phospho-1-deoxy-D-ribulos-1-ylimino)methylamino]-1-(5-phospho-beta-D-ribosyl)imidazole-4-carboxamide + L-glutamine = D-erythro-1-(imidazol-4-yl)glycerol 3-phosphate + 5-amino-1-(5-phospho-beta-D-ribosyl)imidazole-4-carboxamide + L-glutamate + H(+). The protein operates within amino-acid biosynthesis; L-histidine biosynthesis; L-histidine from 5-phospho-alpha-D-ribose 1-diphosphate: step 5/9. In terms of biological role, IGPS catalyzes the conversion of PRFAR and glutamine to IGP, AICAR and glutamate. The HisF subunit catalyzes the cyclization activity that produces IGP and AICAR from PRFAR using the ammonia provided by the HisH subunit. The sequence is that of Imidazole glycerol phosphate synthase subunit HisF from Geobacillus sp. (strain WCH70).